Reading from the N-terminus, the 601-residue chain is Mitochondrial tRNA methylthiotransferase CDK5RAP1 (601 aa).

The N-terminal 33 residues, 1 to 33 (MHPLQCVLQVQRSLGWGPLASVSWLSLRMCRAH), are a transit peptide targeting the mitochondrion. One can recognise an MTTase N-terminal domain in the interval 100–220 (RKVYLETYGC…LPRLLAVAES (121 aa)). [4Fe-4S] cluster-binding residues include Cys-109, Cys-145, Cys-183, Cys-258, Cys-262, and Cys-265. The Radical SAM core domain occupies 244–512 (SASATSAFVS…ITIFREEATK (269 aa)). The 76-residue stretch at 515-590 (QTSVGCTQLV…SQTLRGHVLC (76 aa)) folds into the TRAM domain.

Belongs to the methylthiotransferase family. MiaB subfamily. Interacts with CDK5R1 (p35 form). CDK5RAP1, CDK5RAP2 and CDK5RAP3 show competitive binding to CDK5R1. Forms a complex with CDK5R1 and CDK5. It depends on [4Fe-4S] cluster as a cofactor. In terms of tissue distribution, expressed in heart, brain, placenta, lung, liver, skeletal muscle, kidney and pancreas. Expressed in neurons of central nervous tissue. As to expression, mainly expressed in brain, placenta and testis. High expression in placenta and lung.

It is found in the mitochondrion. It catalyses the reaction N(6)-dimethylallyladenosine(37) in tRNA + (sulfur carrier)-SH + AH2 + 2 S-adenosyl-L-methionine = 2-methylsulfanyl-N(6)-dimethylallyladenosine(37) in tRNA + (sulfur carrier)-H + 5'-deoxyadenosine + L-methionine + A + S-adenosyl-L-homocysteine + 2 H(+). Functionally, methylthiotransferase that catalyzes the conversion of N6-(dimethylallyl)adenosine (i(6)A) to 2-methylthio-N6-(dimethylallyl)adenosine (ms(2)i(6)A) at position 37 (adjacent to the 3'-end of the anticodon) of four mitochondrial DNA-encoded tRNAs (Ser(UCN), Phe, Tyr and Trp). Essential for efficient and highly accurate protein translation by the ribosome. Specifically inhibits CDK5 activation by CDK5R1. Essential for efficient mitochondrial protein synthesis and respiratory chain; shows pathological consequences in mitochondrial disease. The polypeptide is Mitochondrial tRNA methylthiotransferase CDK5RAP1 (Homo sapiens (Human)).